Reading from the N-terminus, the 266-residue chain is Segregation and condensation protein A (266 aa).

The protein belongs to the ScpA family. In terms of assembly, component of a cohesin-like complex composed of ScpA, ScpB and the Smc homodimer, in which ScpA and ScpB bind to the head domain of Smc. The presence of the three proteins is required for the association of the complex with DNA.

It is found in the cytoplasm. Participates in chromosomal partition during cell division. May act via the formation of a condensin-like complex containing Smc and ScpB that pull DNA away from mid-cell into both cell halves. The chain is Segregation and condensation protein A from Coxiella burnetii (strain RSA 493 / Nine Mile phase I).